The chain runs to 221 residues: Oligoribonuclease (221 aa).

In terms of domain architecture, Exonuclease spans 21-186 (LVWVDLEMTG…ADIVESIREL (166 aa)). Residue tyrosine 143 is part of the active site.

The protein belongs to the oligoribonuclease family.

It is found in the cytoplasm. Its function is as follows. 3'-to-5' exoribonuclease specific for small oligoribonucleotides. The polypeptide is Oligoribonuclease (Corynebacterium efficiens (strain DSM 44549 / YS-314 / AJ 12310 / JCM 11189 / NBRC 100395)).